Reading from the N-terminus, the 511-residue chain is Lysine--tRNA ligase (511 aa).

Positions 421 and 428 each coordinate Mg(2+).

Belongs to the class-II aminoacyl-tRNA synthetase family. Homodimer. The cofactor is Mg(2+).

The protein localises to the cytoplasm. The enzyme catalyses tRNA(Lys) + L-lysine + ATP = L-lysyl-tRNA(Lys) + AMP + diphosphate. The polypeptide is Lysine--tRNA ligase (Herminiimonas arsenicoxydans).